The sequence spans 784 residues: 5-methyltetrahydropteroyltriglutamate--homocysteine methyltransferase (784 aa).

5-methyltetrahydropteroyltri-L-glutamate is bound by residues 16 to 19 (RELK) and K112. L-homocysteine is bound by residues 460–462 (IGS) and E513. Residues 460 to 462 (IGS) and E513 contribute to the L-methionine site. Position 590 (W590) interacts with 5-methyltetrahydropteroyltri-L-glutamate. D628 is an L-homocysteine binding site. D628 is a binding site for L-methionine. Residue E634 participates in 5-methyltetrahydropteroyltri-L-glutamate binding. 3 residues coordinate Zn(2+): H670, C672, and E694. Catalysis depends on H723, which acts as the Proton donor. C755 is a binding site for Zn(2+).

It belongs to the vitamin-B12 independent methionine synthase family. Zn(2+) serves as cofactor.

The catalysed reaction is 5-methyltetrahydropteroyltri-L-glutamate + L-homocysteine = tetrahydropteroyltri-L-glutamate + L-methionine. The protein operates within amino-acid biosynthesis; L-methionine biosynthesis via de novo pathway; L-methionine from L-homocysteine (MetE route): step 1/1. In terms of biological role, catalyzes the transfer of a methyl group from 5-methyltetrahydrofolate to homocysteine resulting in methionine formation. This is 5-methyltetrahydropteroyltriglutamate--homocysteine methyltransferase from Acidithiobacillus ferrooxidans (strain ATCC 23270 / DSM 14882 / CIP 104768 / NCIMB 8455) (Ferrobacillus ferrooxidans (strain ATCC 23270)).